A 240-amino-acid polypeptide reads, in one-letter code: 7-cyano-7-deazaguanine synthase (240 aa).

18–28 (FSGGQDSTTCL) contributes to the ATP binding site. Zn(2+) is bound by residues cysteine 197, cysteine 206, cysteine 209, and cysteine 212.

This sequence belongs to the QueC family. Requires Zn(2+) as cofactor.

It catalyses the reaction 7-carboxy-7-deazaguanine + NH4(+) + ATP = 7-cyano-7-deazaguanine + ADP + phosphate + H2O + H(+). Its pathway is purine metabolism; 7-cyano-7-deazaguanine biosynthesis. Functionally, catalyzes the ATP-dependent conversion of 7-carboxy-7-deazaguanine (CDG) to 7-cyano-7-deazaguanine (preQ(0)). This chain is 7-cyano-7-deazaguanine synthase, found in Shewanella putrefaciens (strain CN-32 / ATCC BAA-453).